Consider the following 331-residue polypeptide: Ketol-acid reductoisomerase (NADP(+)) (331 aa).

The region spanning 2 to 182 is the KARI N-terminal Rossmann domain; it reads ARMYYDADAN…GGTRAGILET (181 aa). Residues 25–28, S51, S53, and 83–86 contribute to the NADP(+) site; these read YGSQ and DEVQ. H108 is an active-site residue. G134 contributes to the NADP(+) binding site. The KARI C-terminal knotted domain occupies 183–328; it reads SFREETETDL…KDLRAMFSWL (146 aa). The Mg(2+) site is built by D191, E195, E227, and E231. S252 contacts substrate.

This sequence belongs to the ketol-acid reductoisomerase family. It depends on Mg(2+) as a cofactor.

It catalyses the reaction (2R)-2,3-dihydroxy-3-methylbutanoate + NADP(+) = (2S)-2-acetolactate + NADPH + H(+). It carries out the reaction (2R,3R)-2,3-dihydroxy-3-methylpentanoate + NADP(+) = (S)-2-ethyl-2-hydroxy-3-oxobutanoate + NADPH + H(+). Its pathway is amino-acid biosynthesis; L-isoleucine biosynthesis; L-isoleucine from 2-oxobutanoate: step 2/4. The protein operates within amino-acid biosynthesis; L-valine biosynthesis; L-valine from pyruvate: step 2/4. Its function is as follows. Involved in the biosynthesis of branched-chain amino acids (BCAA). Catalyzes an alkyl-migration followed by a ketol-acid reduction of (S)-2-acetolactate (S2AL) to yield (R)-2,3-dihydroxy-isovalerate. In the isomerase reaction, S2AL is rearranged via a Mg-dependent methyl migration to produce 3-hydroxy-3-methyl-2-ketobutyrate (HMKB). In the reductase reaction, this 2-ketoacid undergoes a metal-dependent reduction by NADPH to yield (R)-2,3-dihydroxy-isovalerate. This is Ketol-acid reductoisomerase (NADP(+)) from Crocosphaera subtropica (strain ATCC 51142 / BH68) (Cyanothece sp. (strain ATCC 51142)).